Reading from the N-terminus, the 486-residue chain is Cysteine--tRNA ligase (486 aa).

Cys29 serves as a coordination point for Zn(2+). Positions 31–41 (VTVYDYCHLGH) match the 'HIGH' region motif. Positions 214, 239, and 243 each coordinate Zn(2+). The 'KMSKS' region signature appears at 271–275 (KMSKS). An ATP-binding site is contributed by Lys274.

The protein belongs to the class-I aminoacyl-tRNA synthetase family. Monomer. Zn(2+) serves as cofactor.

Its subcellular location is the cytoplasm. It catalyses the reaction tRNA(Cys) + L-cysteine + ATP = L-cysteinyl-tRNA(Cys) + AMP + diphosphate. The sequence is that of Cysteine--tRNA ligase from Nostoc sp. (strain PCC 7120 / SAG 25.82 / UTEX 2576).